The primary structure comprises 282 residues: ATP phosphoribosyltransferase (282 aa).

This sequence belongs to the ATP phosphoribosyltransferase family. Long subfamily. The cofactor is Mg(2+).

Its subcellular location is the cytoplasm. It catalyses the reaction 1-(5-phospho-beta-D-ribosyl)-ATP + diphosphate = 5-phospho-alpha-D-ribose 1-diphosphate + ATP. Its pathway is amino-acid biosynthesis; L-histidine biosynthesis; L-histidine from 5-phospho-alpha-D-ribose 1-diphosphate: step 1/9. Its activity is regulated as follows. Feedback inhibited by histidine. In terms of biological role, catalyzes the condensation of ATP and 5-phosphoribose 1-diphosphate to form N'-(5'-phosphoribosyl)-ATP (PR-ATP). Has a crucial role in the pathway because the rate of histidine biosynthesis seems to be controlled primarily by regulation of HisG enzymatic activity. This chain is ATP phosphoribosyltransferase, found in Saccharopolyspora erythraea (strain ATCC 11635 / DSM 40517 / JCM 4748 / NBRC 13426 / NCIMB 8594 / NRRL 2338).